The chain runs to 448 residues: 4-hydroxybenzoate transporter PcaK (448 aa).

Residues Met-1 to Val-30 lie on the Cytoplasmic side of the membrane. Residues Val-31 to Ile-51 traverse the membrane as a helical segment. The Periplasmic segment spans residues Ala-52–Gly-67. A helical membrane pass occupies residues Pro-68–Ala-88. At Asp-89–Lys-94 the chain is on the cytoplasmic side. A helical transmembrane segment spans residues Gly-95–Thr-115. At Asn-116 to Gln-119 the chain is on the periplasmic side. Residues Leu-120–Thr-140 form a helical membrane-spanning segment. Residues Leu-141 to Ser-152 lie on the Cytoplasmic side of the membrane. Residues Leu-153–Ser-173 form a helical membrane-spanning segment. Topologically, residues Ala-174–Ser-184 are periplasmic. The chain crosses the membrane as a helical span at residues Leu-185–Pro-205. Over Glu-206 to Tyr-261 the chain is Cytoplasmic. The chain crosses the membrane as a helical span at residues Gly-262 to Leu-282. The Periplasmic portion of the chain corresponds to Thr-283 to Ala-301. The chain crosses the membrane as a helical span at residues Phe-302–Met-322. Residues Asp-323–Lys-329 are Cytoplasmic-facing. The chain crosses the membrane as a helical span at residues Val-330–Gly-350. A topological domain (periplasmic) is located at residue Asn-351. The chain crosses the membrane as a helical span at residues Ile-352–Ala-372. Over Met-373 to Arg-398 the chain is Cytoplasmic. A helical transmembrane segment spans residues Phe-399–Glu-419. Topologically, residues Gln-420–Val-421 are periplasmic. A helical transmembrane segment spans residues Leu-422–Val-442. Topologically, residues Ser-443–Thr-448 are cytoplasmic.

It belongs to the major facilitator superfamily. Aromatic acid:H(+) symporter (AAHS) (TC 2.A.1.15) family.

It is found in the cell inner membrane. Transports 4-hydroxybenzoate (4-HBA) and protocatechuate across the membrane. Driven by the proton motive force. Also functions as a chemoreceptor, which is required for chemotaxis to aromatic acids. This is 4-hydroxybenzoate transporter PcaK (pcaK) from Pseudomonas putida (Arthrobacter siderocapsulatus).